The chain runs to 176 residues: Flavodoxin 1 (176 aa).

Residues 4 to 165 (TGIFFGSDTG…RVEKWVKQVS (162 aa)) enclose the Flavodoxin-like domain.

It belongs to the flavodoxin family. FMN is required as a cofactor.

Functionally, low-potential electron donor to a number of redox enzymes (Potential). Involved in the reactivation of inactive cob(II)alamin in methionine synthase. The sequence is that of Flavodoxin 1 (fldA) from Salmonella typhimurium (strain LT2 / SGSC1412 / ATCC 700720).